The chain runs to 337 residues: Sideroflexin-4 (337 aa).

An N-acetylserine modification is found at serine 2. 3 consecutive transmembrane segments (helical) span residues 111 to 131 (AAFL…LKGI), 133 to 153 (SVIL…SING), and 165 to 185 (SLLM…PQFV). Lysine 197 is subject to N6-acetyllysine. 2 consecutive transmembrane segments (helical) span residues 251-271 (ASRI…TYFF) and 293-313 (VLAM…IGQI).

The protein belongs to the sideroflexin family.

Its subcellular location is the mitochondrion inner membrane. Functionally, mitochondrial amino-acid transporter. Does not act as a serine transporter: not able to mediate transport of serine into mitochondria. The protein is Sideroflexin-4 of Homo sapiens (Human).